A 591-amino-acid polypeptide reads, in one-letter code: Aspartate--tRNA(Asp/Asn) ligase (591 aa).

Position 175 (E175) interacts with L-aspartate. Positions 199–202 (QQFK) are aspartate. R221 and H453 together coordinate L-aspartate. 221-223 (RDE) contributes to the ATP binding site. E486 contributes to the ATP binding site. R493 serves as a coordination point for L-aspartate. Position 538–541 (538–541 (GIDR)) interacts with ATP.

It belongs to the class-II aminoacyl-tRNA synthetase family. Type 1 subfamily. As to quaternary structure, homodimer.

The protein resides in the cytoplasm. The enzyme catalyses tRNA(Asx) + L-aspartate + ATP = L-aspartyl-tRNA(Asx) + AMP + diphosphate. Its function is as follows. Aspartyl-tRNA synthetase with relaxed tRNA specificity since it is able to aspartylate not only its cognate tRNA(Asp) but also tRNA(Asn). Reaction proceeds in two steps: L-aspartate is first activated by ATP to form Asp-AMP and then transferred to the acceptor end of tRNA(Asp/Asn). The chain is Aspartate--tRNA(Asp/Asn) ligase from Cereibacter sphaeroides (strain ATCC 17025 / ATH 2.4.3) (Rhodobacter sphaeroides).